The sequence spans 136 residues: Histone H3-7 (136 aa).

A disordered region spans residues 1–43 (MARTKQTARKSTGGKAPRKQLATKAARKSAPATGGVKKPHRYR). The residue at position 3 (Arg3) is an Asymmetric dimethylarginine. Citrulline; alternate is present on Arg3. Thr4 is subject to Phosphothreonine. The residue at position 5 (Lys5) is an Allysine; alternate. At Lys5 the chain carries N6,N6,N6-trimethyllysine; alternate. Lys5 bears the N6,N6-dimethyllysine; alternate mark. Lys5 carries the N6-(2-hydroxyisobutyryl)lysine; alternate modification. Lys5 is subject to N6-(beta-hydroxybutyryl)lysine; alternate. Lys5 carries the post-translational modification N6-acetyllysine; alternate. Lys5 is modified (N6-methyllysine; alternate). Residue Gln6 is modified to 5-glutamyl dopamine; alternate. Gln6 bears the 5-glutamyl serotonin; alternate mark. Thr7 carries the post-translational modification Phosphothreonine. Citrulline; alternate is present on Arg9. Position 9 is a symmetric dimethylarginine (Arg9). Lys10 is subject to N6,N6,N6-trimethyllysine; alternate. Residue Lys10 is modified to N6,N6-dimethyllysine; alternate. At Lys10 the chain carries N6-(2-hydroxyisobutyryl)lysine; alternate. The residue at position 10 (Lys10) is an N6-(beta-hydroxybutyryl)lysine; alternate. Lys10 bears the N6-acetyllysine; alternate mark. Lys10 carries the post-translational modification N6-methyllysine; alternate. Lys10 is subject to N6-lactoyllysine; alternate. At Ser11 the chain carries ADP-ribosylserine; alternate. Position 11 is a phosphoserine; alternate (Ser11). Residue Thr12 is modified to Phosphothreonine. An N6-(2-hydroxyisobutyryl)lysine; alternate modification is found at Lys15. Lys15 carries the post-translational modification N6-(beta-hydroxybutyryl)lysine; alternate. Residue Lys15 is modified to N6-acetyllysine; alternate. Lys15 carries the post-translational modification N6-lactoyllysine; alternate. Lys15 is modified (N6-glutaryllysine; alternate). An N6-succinyllysine; alternate modification is found at Lys15. Arg18 bears the Asymmetric dimethylarginine mark. Citrulline; alternate is present on Arg18. N6-(2-hydroxyisobutyryl)lysine; alternate occurs at positions 19 and 24. N6-(beta-hydroxybutyryl)lysine; alternate is present on residues Lys19 and Lys24. N6-acetyllysine; alternate occurs at positions 19 and 24. 2 positions are modified to N6-methyllysine; alternate: Lys19 and Lys24. N6-lactoyllysine; alternate is present on residues Lys19 and Lys24. N6-glutaryllysine; alternate is present on residues Lys19 and Lys24. N6-butyryllysine; alternate is present on residues Lys19 and Lys24. Arg27 is subject to Citrulline. Lys28 carries the post-translational modification N6,N6,N6-trimethyllysine; alternate. The residue at position 28 (Lys28) is an N6,N6-dimethyllysine; alternate. Lys28 is subject to N6-(2-hydroxyisobutyryl)lysine; alternate. Lys28 is subject to N6-acetyllysine; alternate. At Lys28 the chain carries N6-methyllysine; alternate. The residue at position 28 (Lys28) is an N6-lactoyllysine; alternate. At Lys28 the chain carries N6-glutaryllysine; alternate. Ser29 carries the post-translational modification ADP-ribosylserine; alternate. Ser29 bears the Phosphoserine; alternate mark. N6,N6,N6-trimethyllysine; alternate is present on Lys37. At Lys37 the chain carries N6,N6-dimethyllysine; alternate. The residue at position 37 (Lys37) is an N6-(2-hydroxyisobutyryl)lysine; alternate. An N6-acetyllysine; alternate modification is found at Lys37. Lys37 is modified (N6-methyllysine; alternate). Lys38 bears the N6-methyllysine mark. Position 42 is a phosphotyrosine (Tyr42). Lys57 carries the N6,N6,N6-trimethyllysine; alternate modification. Position 57 is an N6-(2-hydroxyisobutyryl)lysine; alternate (Lys57). N6-(beta-hydroxybutyryl)lysine; alternate is present on Lys57. Lys57 bears the N6-acetyllysine; alternate mark. The residue at position 57 (Lys57) is an N6-lactoyllysine; alternate. Lys57 is modified (N6-glutaryllysine; alternate). Lys57 is subject to N6-succinyllysine; alternate. Lys57 is modified (N6-methyllysine). Ser58 is modified (phosphoserine). Lys65 and Lys80 each carry N6-(2-hydroxyisobutyryl)lysine; alternate. Lys65 and Lys80 each carry N6-methyllysine; alternate. Lys80 bears the N6,N6,N6-trimethyllysine; alternate mark. N6,N6-dimethyllysine; alternate is present on Lys80. Lys80 is modified (N6-acetyllysine; alternate). The residue at position 80 (Lys80) is an N6-lactoyllysine; alternate. At Lys80 the chain carries N6-glutaryllysine; alternate. Lys80 is modified (N6-succinyllysine; alternate). Thr81 carries the phosphothreonine modification. Residue Ser87 is modified to Phosphoserine. Thr108 is modified (phosphothreonine). N6-acetyllysine; alternate is present on residues Lys116 and Lys123. Lys116 and Lys123 each carry N6-glutaryllysine; alternate. Position 123 is an N6-(2-hydroxyisobutyryl)lysine; alternate (Lys123). An N6-methyllysine; alternate modification is found at Lys123. The residue at position 123 (Lys123) is an N6-succinyllysine; alternate.

The protein belongs to the histone H3 family. As to quaternary structure, the nucleosome is a histone octamer containing two molecules each of H2A, H2B, H3 and H4 assembled in one H3-H4 heterotetramer and two H2A-H2B heterodimers. The octamer wraps approximately 147 bp of DNA. During nucleosome assembly the chaperone ASF1A interacts with the histone H3-H4 heterodimer. Acetylation is generally linked to gene activation. Acetylation on Lys-10 (H3K9ac) impairs methylation at Arg-9 (H3R8me2s). Acetylation on Lys-19 (H3K18ac) and Lys-24 (H3K24ac) favors methylation at Arg-18 (H3R17me). Acetylation at Lys-123 (H3K122ac) by EP300/p300 plays a central role in chromatin structure: localizes at the surface of the histone octamer and stimulates transcription, possibly by promoting nucleosome instability. Post-translationally, citrullination at Arg-9 (H3R8ci) and/or Arg-18 (H3R17ci) by PADI4 impairs methylation and represses transcription. In terms of processing, asymmetric dimethylation at Arg-18 (H3R17me2a) by CARM1 is linked to gene activation. Symmetric dimethylation at Arg-9 (H3R8me2s) by PRMT5 is linked to gene repression. Asymmetric dimethylation at Arg-3 (H3R2me2a) by PRMT6 is linked to gene repression and is mutually exclusive with H3 Lys-5 methylation (H3K4me2 and H3K4me3). H3R2me2a is present at the 3' of genes regardless of their transcription state and is enriched on inactive promoters, while it is absent on active promoters. Methylation at Lys-5 (H3K4me), Lys-37 (H3K36me) and Lys-80 (H3K79me) are linked to gene activation. Methylation at Lys-5 (H3K4me) facilitates subsequent acetylation of H3 and H4. Methylation at Lys-80 (H3K79me) is associated with DNA double-strand break (DSB) responses and is a specific target for TP53BP1. Methylation at Lys-10 (H3K9me) and Lys-28 (H3K27me) are linked to gene repression. Methylation at Lys-10 (H3K9me) is a specific target for HP1 proteins (CBX1, CBX3 and CBX5) and prevents subsequent phosphorylation at Ser-11 (H3S10ph) and acetylation of H3 and H4. Methylation at Lys-5 (H3K4me) and Lys-80 (H3K79me) require preliminary monoubiquitination of H2B at 'Lys-120'. Methylation at Lys-10 (H3K9me) and Lys-28 (H3K27me) are enriched in inactive X chromosome chromatin. Monomethylation at Lys-57 (H3K56me1) by EHMT2/G9A in G1 phase promotes interaction with PCNA and is required for DNA replication. Post-translationally, phosphorylated at Thr-4 (H3T3ph) by HASPIN during prophase and dephosphorylated during anaphase. Phosphorylation at Ser-11 (H3S10ph) by AURKB is crucial for chromosome condensation and cell-cycle progression during mitosis and meiosis. In addition phosphorylation at Ser-11 (H3S10ph) by RPS6KA4 and RPS6KA5 is important during interphase because it enables the transcription of genes following external stimulation, like mitogens, stress, growth factors or UV irradiation and result in the activation of genes, such as c-fos and c-jun. Phosphorylation at Ser-11 (H3S10ph), which is linked to gene activation, prevents methylation at Lys-10 (H3K9me) but facilitates acetylation of H3 and H4. Phosphorylation at Ser-11 (H3S10ph) by AURKB mediates the dissociation of HP1 proteins (CBX1, CBX3 and CBX5) from heterochromatin. Phosphorylation at Ser-11 (H3S10ph) is also an essential regulatory mechanism for neoplastic cell transformation. Phosphorylated at Ser-29 (H3S28ph) by MAP3K20 isoform 1, RPS6KA5 or AURKB during mitosis or upon ultraviolet B irradiation. Phosphorylation at Thr-7 (H3T6ph) by PRKCB is a specific tag for epigenetic transcriptional activation that prevents demethylation of Lys-5 (H3K4me) by LSD1/KDM1A. At centromeres, specifically phosphorylated at Thr-12 (H3T11ph) from prophase to early anaphase, by DAPK3 and PKN1. Phosphorylation at Thr-12 (H3T11ph) by PKN1 or isoform M2 of PKM (PKM2) is a specific tag for epigenetic transcriptional activation that promotes demethylation of Lys-10 (H3K9me) by KDM4C/JMJD2C. Phosphorylation at Tyr-42 (H3Y41ph) by JAK2 promotes exclusion of CBX5 (HP1 alpha) from chromatin. In terms of processing, ubiquitinated. Lysine deamination at Lys-5 (H3K4all) to form allysine is mediated by LOXL2. Allysine formation by LOXL2 only takes place on H3K4me3 and results in gene repression. Post-translationally, butyrylation of histones marks active promoters and competes with histone acetylation. It is present during late spermatogenesis. In terms of processing, succinylation at Lys-80 (H3K79succ) by KAT2A takes place with a maximum frequency around the transcription start sites of genes. It gives a specific tag for epigenetic transcription activation. Desuccinylation at Lys-123 (H3K122succ) by SIRT7 in response to DNA damage promotes chromatin condensation and double-strand breaks (DSBs) repair. Serine ADP-ribosylation constitutes the primary form of ADP-ribosylation of proteins in response to DNA damage. Serine ADP-ribosylation at Ser-11 (H3S10ADPr) is mutually exclusive with phosphorylation at Ser-11 (H3S10ph) and impairs acetylation at Lys-10 (H3K9ac).

The protein localises to the nucleus. Its subcellular location is the chromosome. Core component of nucleosome. Nucleosomes wrap and compact DNA into chromatin, limiting DNA accessibility to the cellular machineries which require DNA as a template. Histones thereby play a central role in transcription regulation, DNA repair, DNA replication and chromosomal stability. DNA accessibility is regulated via a complex set of post-translational modifications of histones, also called histone code, and nucleosome remodeling. In Homo sapiens (Human), this protein is Histone H3-7.